The primary structure comprises 107 residues: UPF0145 protein ECA2666 (107 aa).

Belongs to the UPF0145 family.

This chain is UPF0145 protein ECA2666, found in Pectobacterium atrosepticum (strain SCRI 1043 / ATCC BAA-672) (Erwinia carotovora subsp. atroseptica).